We begin with the raw amino-acid sequence, 213 residues long: Putative amidate substrates transporter protein (213 aa).

6 consecutive transmembrane segments (helical) span residues 4 to 20 (VGLF…GLML), 32 to 48 (LNFF…TVLI), 56 to 72 (AVIF…FTYL), 116 to 132 (VIWL…FLLL), 146 to 162 (VAVA…AFLI), and 172 to 188 (LPAA…VVLA).

The protein belongs to the AmiS/UreI family.

It localises to the cell membrane. Its function is as follows. Possible transporter that might be responsible for the adsorption of amidase substrates or release of their hydrolysis products. In Mycolicibacterium smegmatis (Mycobacterium smegmatis), this protein is Putative amidate substrates transporter protein.